Reading from the N-terminus, the 257-residue chain is 1-(5-phosphoribosyl)-5-[(5-phosphoribosylamino)methylideneamino] imidazole-4-carboxamide isomerase (257 aa).

The active-site Proton acceptor is the aspartate 8. Catalysis depends on aspartate 131, which acts as the Proton donor.

Belongs to the HisA/HisF family.

The protein resides in the cytoplasm. It catalyses the reaction 1-(5-phospho-beta-D-ribosyl)-5-[(5-phospho-beta-D-ribosylamino)methylideneamino]imidazole-4-carboxamide = 5-[(5-phospho-1-deoxy-D-ribulos-1-ylimino)methylamino]-1-(5-phospho-beta-D-ribosyl)imidazole-4-carboxamide. The protein operates within amino-acid biosynthesis; L-histidine biosynthesis; L-histidine from 5-phospho-alpha-D-ribose 1-diphosphate: step 4/9. This chain is 1-(5-phosphoribosyl)-5-[(5-phosphoribosylamino)methylideneamino] imidazole-4-carboxamide isomerase, found in Nitrosospira multiformis (strain ATCC 25196 / NCIMB 11849 / C 71).